A 284-amino-acid chain; its full sequence is Tropomyosin (284 aa).

At methionine 1 the chain carries N-acetylmethionine. 2 disordered regions span residues methionine 1 to lysine 49 and glutamate 103 to methionine 126. Residues methionine 1–phenylalanine 284 adopt a coiled-coil conformation. Residues lysine 12–alanine 45 show a composition bias toward basic and acidic residues.

It belongs to the tropomyosin family. Homodimer. As to expression, expressed in leg muscle and chest protection muscle (at protein level).

Tropomyosin, in association with the troponin complex, plays a central role in the calcium dependent regulation of muscle contraction. The chain is Tropomyosin from Chionoecetes opilio (Atlantic snow crab).